A 529-amino-acid chain; its full sequence is Bifunctional purine biosynthesis protein PurH (529 aa).

Residues 1–148 enclose the MGS-like domain; it reads MQQRRPVRRA…KNHRDVAIVV (148 aa). An N6-acetyllysine modification is found at Lys287.

It belongs to the PurH family.

It carries out the reaction (6R)-10-formyltetrahydrofolate + 5-amino-1-(5-phospho-beta-D-ribosyl)imidazole-4-carboxamide = 5-formamido-1-(5-phospho-D-ribosyl)imidazole-4-carboxamide + (6S)-5,6,7,8-tetrahydrofolate. It catalyses the reaction IMP + H2O = 5-formamido-1-(5-phospho-D-ribosyl)imidazole-4-carboxamide. The protein operates within purine metabolism; IMP biosynthesis via de novo pathway; 5-formamido-1-(5-phospho-D-ribosyl)imidazole-4-carboxamide from 5-amino-1-(5-phospho-D-ribosyl)imidazole-4-carboxamide (10-formyl THF route): step 1/1. Its pathway is purine metabolism; IMP biosynthesis via de novo pathway; IMP from 5-formamido-1-(5-phospho-D-ribosyl)imidazole-4-carboxamide: step 1/1. This Escherichia coli O6:K15:H31 (strain 536 / UPEC) protein is Bifunctional purine biosynthesis protein PurH.